Reading from the N-terminus, the 197-residue chain is Dephospho-CoA kinase (197 aa).

In terms of domain architecture, DPCK spans 5 to 197 (RLGLTGSIGM…IAHIRETADA (193 aa)). Residue 13–18 (GMGKST) coordinates ATP.

It belongs to the CoaE family.

The protein resides in the cytoplasm. It carries out the reaction 3'-dephospho-CoA + ATP = ADP + CoA + H(+). The protein operates within cofactor biosynthesis; coenzyme A biosynthesis; CoA from (R)-pantothenate: step 5/5. Its function is as follows. Catalyzes the phosphorylation of the 3'-hydroxyl group of dephosphocoenzyme A to form coenzyme A. The polypeptide is Dephospho-CoA kinase (Cereibacter sphaeroides (strain ATCC 17023 / DSM 158 / JCM 6121 / CCUG 31486 / LMG 2827 / NBRC 12203 / NCIMB 8253 / ATH 2.4.1.) (Rhodobacter sphaeroides)).